A 166-amino-acid polypeptide reads, in one-letter code: UPF0304 protein VFMJ11_1926 (166 aa).

The protein belongs to the UPF0304 family.

This Aliivibrio fischeri (strain MJ11) (Vibrio fischeri) protein is UPF0304 protein VFMJ11_1926.